We begin with the raw amino-acid sequence, 157 residues long: Crossover junction endodeoxyribonuclease RuvC (157 aa).

Active-site residues include aspartate 7, glutamate 67, and aspartate 139. Positions 7, 67, and 139 each coordinate Mg(2+).

It belongs to the RuvC family. Homodimer which binds Holliday junction (HJ) DNA. The HJ becomes 2-fold symmetrical on binding to RuvC with unstacked arms; it has a different conformation from HJ DNA in complex with RuvA. In the full resolvosome a probable DNA-RuvA(4)-RuvB(12)-RuvC(2) complex forms which resolves the HJ. Mg(2+) serves as cofactor.

It localises to the cytoplasm. It carries out the reaction Endonucleolytic cleavage at a junction such as a reciprocal single-stranded crossover between two homologous DNA duplexes (Holliday junction).. Its function is as follows. The RuvA-RuvB-RuvC complex processes Holliday junction (HJ) DNA during genetic recombination and DNA repair. Endonuclease that resolves HJ intermediates. Cleaves cruciform DNA by making single-stranded nicks across the HJ at symmetrical positions within the homologous arms, yielding a 5'-phosphate and a 3'-hydroxyl group; requires a central core of homology in the junction. The consensus cleavage sequence is 5'-(A/T)TT(C/G)-3'. Cleavage occurs on the 3'-side of the TT dinucleotide at the point of strand exchange. HJ branch migration catalyzed by RuvA-RuvB allows RuvC to scan DNA until it finds its consensus sequence, where it cleaves and resolves the cruciform DNA. The protein is Crossover junction endodeoxyribonuclease RuvC of Prochlorococcus marinus (strain MIT 9312).